An 85-amino-acid chain; its full sequence is MKLSLLLVISASMLIDGLVNADGYIRGSNGCKVSCLWGNDGCNKECRAYGASYGYCWTWGLACWCEGLPDDKTWKSESNTCGGKK.

The first 21 residues, methionine 1 to alanine 21, serve as a signal peptide directing secretion. Residues aspartate 22 to glycine 82 form the LCN-type CS-alpha/beta domain. 4 cysteine pairs are disulfide-bonded: cysteine 31/cysteine 81, cysteine 35/cysteine 56, cysteine 42/cysteine 63, and cysteine 46/cysteine 65.

This sequence belongs to the long (4 C-C) scorpion toxin superfamily. Sodium channel inhibitor family. Beta subfamily. In terms of tissue distribution, expressed by the venom gland.

The protein localises to the secreted. Functionally, binds to sodium channels (Nav) and inhibits them. Recombinant ANEP delays the convulsion seizure of insect models by 18% and shows anti-neuroexcitatory activity. The sequence is that of Anti-neuroexcitation peptide 2 from Olivierus martensii (Manchurian scorpion).